The following is a 154-amino-acid chain: D-aminoacyl-tRNA deacylase (154 aa).

A Gly-cisPro motif, important for rejection of L-amino acids motif is present at residues 142 to 143 (GP).

It belongs to the DTD family. In terms of assembly, homodimer.

It is found in the cytoplasm. The enzyme catalyses glycyl-tRNA(Ala) + H2O = tRNA(Ala) + glycine + H(+). It carries out the reaction a D-aminoacyl-tRNA + H2O = a tRNA + a D-alpha-amino acid + H(+). Functionally, an aminoacyl-tRNA editing enzyme that deacylates mischarged D-aminoacyl-tRNAs. Also deacylates mischarged glycyl-tRNA(Ala), protecting cells against glycine mischarging by AlaRS. Acts via tRNA-based rather than protein-based catalysis; rejects L-amino acids rather than detecting D-amino acids in the active site. By recycling D-aminoacyl-tRNA to D-amino acids and free tRNA molecules, this enzyme counteracts the toxicity associated with the formation of D-aminoacyl-tRNA entities in vivo and helps enforce protein L-homochirality. The protein is D-aminoacyl-tRNA deacylase of Polaromonas sp. (strain JS666 / ATCC BAA-500).